We begin with the raw amino-acid sequence, 204 residues long: Neurensin-2 (204 aa).

A run of 2 helical transmembrane segments spans residues 66–86 (LSSGTLLLLLGVAALTTGYAV) and 122–142 (LCVAAGVLLAICLFWAMIGWL). The tract at residues 178–204 (SGQSWFSPPASPFGQSSVQTIQPKRDS) is disordered. Over residues 190-204 (FGQSSVQTIQPKRDS) the composition is skewed to polar residues.

Belongs to the VMP family.

Its subcellular location is the membrane. May play a role in maintenance and/or transport of vesicles. The polypeptide is Neurensin-2 (NRSN2) (Homo sapiens (Human)).